The primary structure comprises 513 residues: MSDKIQSRESKTTKPTKTEKISDKSGNLSQVKSSKNLSKSQSIYLEIDSLSKKFLEEGRQYIYKWIRDEYGLSKNEATALDISIYNTTIARMINIYKFDETLAAFLPFKFGKEIISPRQDFYGFATTCGTILYYQSFGDTLGYYNGNWEFNYGNDNRPDYVNDLISEFIHLGGINDISMVNWLASDDTILYLITARVVLEYFFQGDNAEISYFGTRLRQEYLKAKPLIQNRHPGQTTMDSLDIMSNIEWDKLPYNSRAIGAGAAMRSGSIGIFYPGRQNRKKLVALAVECSRITHNSATAILGSVTSALFTAFSLEKISVNLWPHYLLEILRSNIIDEYIEQSRPNEYSLFSRDKVIFQGQWEKYVSSRFSGVNPRDLRYMHNPVERYRYLTENFSKGCDMPGGCGDDCVIMAYDSLLQSNGVLEKVVVYSILHPGDSDTVGSVALSWFGAYYSTKKNLDILSPRFDELEYSNEINNLIWNTEDFVLGLTKVFYKFIYIDIATDLVEQSMKLK.

The segment covering 1-23 (MSDKIQSRESKTTKPTKTEKISD) has biased composition (basic and acidic residues). Residues 1–33 (MSDKIQSRESKTTKPTKTEKISDKSGNLSQVKS) are disordered. Residues 24 to 33 (KSGNLSQVKS) show a composition bias toward polar residues.

This sequence belongs to the ADP-ribosylglycohydrolase family.

The polypeptide is Putative ADP-ribosyl glycohydrolase L444 (Acanthamoeba polyphaga mimivirus (APMV)).